A 414-amino-acid polypeptide reads, in one-letter code: Tar DNA-binding protein homolog 1 (414 aa).

2 stretches are compositionally biased toward basic and acidic residues: residues Met-1–Asp-44 and Asp-153–Glu-167. 2 disordered regions span residues Met-1–Pro-58 and Ser-132–Glu-167. 2 RRM domains span residues Val-173–Pro-259 and Ser-262–Pro-341. The segment at Glu-343–Trp-414 is disordered. The segment covering Asn-361–Ile-373 has biased composition (basic and acidic residues).

In terms of assembly, interacts with chromobox protein homolog hpl-2; interaction may maintain localization of hpl-2 to gene bodies. Widely expressed in a range of tissues including body wall muscles, pharynx and neurons of the midbody in adults and larvae.

Its subcellular location is the nucleus. It is found in the cytoplasm. Its function is as follows. RNA-binding protein which regulates transcription, splicing and RNA-editing. Limits the accumulation of double-stranded RNA by maintaining the abundance of the mature RNA transcripts that are formed from double-stranded precursor RNAs. Stress response protein that acts downstream of daf-16 in the insulin/IGF pathway to regulate longevity and the cellular stress response to osmotic, oxidative, proteotoxic and endoplasmic reticulum stress. Involved in the regulation of physiological processes including aging, fertility, growth and locomotion. Plays a role in maintaining localization of chromobox protein homolog hpl-2 to gene bodies, perhaps acting via binding to nascent RNA transcripts. This Caenorhabditis elegans protein is Tar DNA-binding protein homolog 1.